We begin with the raw amino-acid sequence, 83 residues long: Cytochrome b559 subunit alpha (83 aa).

A helical membrane pass occupies residues 21–35 (VIHSITIPSLFIAGW). Histidine 23 provides a ligand contact to heme.

Belongs to the PsbE/PsbF family. Heterodimer of an alpha subunit and a beta subunit. PSII is composed of 1 copy each of membrane proteins PsbA, PsbB, PsbC, PsbD, PsbE, PsbF, PsbH, PsbI, PsbJ, PsbK, PsbL, PsbM, PsbT, PsbX, PsbY, PsbZ, Psb30/Ycf12, at least 3 peripheral proteins of the oxygen-evolving complex and a large number of cofactors. It forms dimeric complexes. Requires heme b as cofactor.

The protein resides in the plastid. It is found in the chloroplast thylakoid membrane. Functionally, this b-type cytochrome is tightly associated with the reaction center of photosystem II (PSII). PSII is a light-driven water:plastoquinone oxidoreductase that uses light energy to abstract electrons from H(2)O, generating O(2) and a proton gradient subsequently used for ATP formation. It consists of a core antenna complex that captures photons, and an electron transfer chain that converts photonic excitation into a charge separation. This Mesembryanthemum crystallinum (Common ice plant) protein is Cytochrome b559 subunit alpha.